The chain runs to 417 residues: Squamosa promoter-binding-like protein 14 (417 aa).

Composition is skewed to gly residues over residues 1–26 and 51–60; these read MEMA…GGGG and AGGGGTGSGS. Disordered regions lie at residues 1–32 and 51–102; these read MEMA…EHRQ and AGGG…PPPP. Residues 61–74 are compositionally biased toward low complexity; the sequence is GSASAAPPSSSSKA. Residues 75–84 are compositionally biased toward gly residues; sequence AGGGRGGGGK. The SBP-type zinc finger occupies 101 to 178; it reads PPRCQVEGCG…AGHNERRRRP (78 aa). Zn(2+)-binding residues include C104, C109, C126, H129, C145, C148, and H152. Positions 161–177 match the Bipartite nuclear localization signal motif; that stretch reads KRSCRRRLAGHNERRRR. The residue at position 163 (S163) is a Phosphoserine. Residue C164 participates in Zn(2+) binding. The segment at 387-417 is disordered; sequence LQGNGPAPAPRIDPGSGSTFDQTSNTMDWSL. Residues 402–417 are compositionally biased toward polar residues; sequence SGSTFDQTSNTMDWSL.

Interacts with PCF1 and PCF2. Interacts with IPI1. Interacts with D53. Interacts with SLR1. Interacts (via C-terminus) with SHI1. Post-translationally, phosphorylated at Ser-163 in response to infection by the fungal pathogen Magnaporthe oryzae. Ubiquitinated by IPI1, which leads to proteasomal degradation. In terms of tissue distribution, expressed in young panicles. Expressed in the shoot apex at both the vegetative and reproductive stages. Highly expressed in the promordia of primary and secondary branches. Highly expressed in young panicles.

It is found in the nucleus. Its function is as follows. Transcriptional activator that binds to the SBP-box DNA core binding motif 5'-GTAC-3'. Can target the TCP motif 5'-TGGGCC/T-3' through interaction with PCF1 and PCF2. Key regulator of the plant architecture that controls shoot branching and panicle development. Promotes panicle branching. Promotes high grain yield. Binds to the promoters of TB1 and DEP1. Suppresses rice tillering mainly through positive regulation of TB1. Regulates plant height and panicle length through positive regulation of DEP1. Repressed by D53 in strigolactone (SL) signaling. Acts with D53 to mediate the SL-regulated tiller development. Functions as a direct downstream component of D53 in regulating tiller number and SL-induced gene expression. Binds directly to the D53 promoter and plays a critical role in the negative feedback regulation of SL-induced D53 expression. Involved in defense response against pathogens. Phosphorylated at Ser-163 in response to infection by the fungal pathogen Magnaporthe oryzae. Phosphorylation reduces SPL14/IPA1 binding to the GTAC site in the DEP1 promoter and enhances binding to the TGGGCC site in the WRKY45 promoter. Binding to the promoter of the pathogen defense gene WRKY45 activates its expression, leading to enhanced disease resistance. Reduces gibberellin-mediated disease susceptibility by stabilizing SLR1. Possesses transactivation activity in yeast cells. This is Squamosa promoter-binding-like protein 14 from Oryza sativa subsp. japonica (Rice).